Consider the following 110-residue polypeptide: Membrane-associated protein slr1513 (110 aa).

Its subcellular location is the cellular thylakoid membrane. The protein localises to the cell membrane. The chain is Membrane-associated protein slr1513 from Synechocystis sp. (strain ATCC 27184 / PCC 6803 / Kazusa).